We begin with the raw amino-acid sequence, 110 residues long: Iron-sulfur cluster assembly protein CyaY (110 aa).

The protein belongs to the frataxin family.

Its function is as follows. Involved in iron-sulfur (Fe-S) cluster assembly. May act as a regulator of Fe-S biogenesis. The protein is Iron-sulfur cluster assembly protein CyaY of Pseudomonas fluorescens (strain SBW25).